A 318-amino-acid chain; its full sequence is Ribokinase (318 aa).

Substrate contacts are provided by residues 11-13, 41-45, and Glu-146; these read NTD and GKGAN. ATP contacts are provided by residues Asn-190 and 229-234; that span reads TLGSQG. The K(+) site is built by Asp-256 and Thr-258. Residue 261–262 coordinates ATP; that stretch reads GD. Asp-262 serves as a coordination point for substrate. The Proton acceptor role is filled by Asp-262. The K(+) site is built by Thr-292, Arg-295, Gly-297, and Ser-301.

The protein belongs to the carbohydrate kinase PfkB family. Ribokinase subfamily. In terms of assembly, homodimer. Mg(2+) serves as cofactor.

Its subcellular location is the cytoplasm. It is found in the nucleus. The catalysed reaction is D-ribose + ATP = D-ribose 5-phosphate + ADP + H(+). The protein operates within carbohydrate metabolism; D-ribose degradation; D-ribose 5-phosphate from beta-D-ribopyranose: step 2/2. Activated by a monovalent cation that binds near, but not in, the active site. The most likely occupant of the site in vivo is potassium. Ion binding induces a conformational change that may alter substrate affinity. Its function is as follows. Catalyzes the phosphorylation of ribose at O-5 in a reaction requiring ATP and magnesium. The resulting D-ribose-5-phosphate can then be used either for sythesis of nucleotides, histidine, and tryptophan, or as a component of the pentose phosphate pathway. The protein is Ribokinase of Schizosaccharomyces pombe (strain 972 / ATCC 24843) (Fission yeast).